A 324-amino-acid polypeptide reads, in one-letter code: Cytochrome c biogenesis protein CcsA (324 aa).

8 helical membrane-spanning segments follow: residues 15–35 (FSIV…DEII), 44–64 (GMIA…IYSG), 71–91 (LYES…VPYF), 98–118 (LSTI…SGLL), 143–163 (MILG…LLVL), 228–248 (VISL…VWAN), 255–275 (WNWD…AVYL), and 289–309 (AIVA…VNLL).

Belongs to the CcmF/CycK/Ccl1/NrfE/CcsA family. As to quaternary structure, may interact with Ccs1.

The protein resides in the plastid. It is found in the chloroplast thylakoid membrane. Functionally, required during biogenesis of c-type cytochromes (cytochrome c6 and cytochrome f) at the step of heme attachment. In Daucus carota (Wild carrot), this protein is Cytochrome c biogenesis protein CcsA.